Consider the following 407-residue polypeptide: Methylthioribose-1-phosphate isomerase (407 aa).

The active-site Proton donor is D275.

It belongs to the eIF-2B alpha/beta/delta subunits family. MtnA subfamily.

It localises to the cytoplasm. Its subcellular location is the nucleus. It carries out the reaction 5-(methylsulfanyl)-alpha-D-ribose 1-phosphate = 5-(methylsulfanyl)-D-ribulose 1-phosphate. Its pathway is amino-acid biosynthesis; L-methionine biosynthesis via salvage pathway; L-methionine from S-methyl-5-thio-alpha-D-ribose 1-phosphate: step 1/6. Catalyzes the interconversion of methylthioribose-1-phosphate (MTR-1-P) into methylthioribulose-1-phosphate (MTRu-1-P). The sequence is that of Methylthioribose-1-phosphate isomerase from Kluyveromyces lactis (strain ATCC 8585 / CBS 2359 / DSM 70799 / NBRC 1267 / NRRL Y-1140 / WM37) (Yeast).